The following is a 259-amino-acid chain: Thiazole synthase (259 aa).

Lysine 99 functions as the Schiff-base intermediate with DXP in the catalytic mechanism. Residues glycine 161, 187–188 (AG), and 209–210 (NT) each bind 1-deoxy-D-xylulose 5-phosphate.

The protein belongs to the ThiG family. As to quaternary structure, homotetramer. Forms heterodimers with either ThiH or ThiS.

Its subcellular location is the cytoplasm. It carries out the reaction [ThiS sulfur-carrier protein]-C-terminal-Gly-aminoethanethioate + 2-iminoacetate + 1-deoxy-D-xylulose 5-phosphate = [ThiS sulfur-carrier protein]-C-terminal Gly-Gly + 2-[(2R,5Z)-2-carboxy-4-methylthiazol-5(2H)-ylidene]ethyl phosphate + 2 H2O + H(+). It participates in cofactor biosynthesis; thiamine diphosphate biosynthesis. Its function is as follows. Catalyzes the rearrangement of 1-deoxy-D-xylulose 5-phosphate (DXP) to produce the thiazole phosphate moiety of thiamine. Sulfur is provided by the thiocarboxylate moiety of the carrier protein ThiS. In vitro, sulfur can be provided by H(2)S. The polypeptide is Thiazole synthase (Nautilia profundicola (strain ATCC BAA-1463 / DSM 18972 / AmH)).